A 157-amino-acid polypeptide reads, in one-letter code: Small ribosomal subunit protein uS7 (157 aa).

It belongs to the universal ribosomal protein uS7 family. As to quaternary structure, part of the 30S ribosomal subunit. Contacts proteins S9 and S11.

One of the primary rRNA binding proteins, it binds directly to 16S rRNA where it nucleates assembly of the head domain of the 30S subunit. Is located at the subunit interface close to the decoding center, probably blocks exit of the E-site tRNA. This is Small ribosomal subunit protein uS7 from Chlamydia trachomatis serovar L2 (strain ATCC VR-902B / DSM 19102 / 434/Bu).